A 788-amino-acid polypeptide reads, in one-letter code: Protein FAR1-RELATED SEQUENCE 12 (788 aa).

Residues 57–133 (EFYNAYAART…QKEHNHELGG (77 aa)) enclose the FAR1 1 domain. A disordered region spans residues 127–200 (HNHELGGEGS…GEVSDDHHQT (74 aa)). Residues 142–151 (PRPSRAPAPT) are compositionally biased toward low complexity. Positions 165–175 (KVVDESDRETR) are enriched in basic and acidic residues. An FAR1 2 domain is found at 225 to 301 (QFYQAYAEVV…NKDHNHDLEP (77 aa)). One can recognise an MULE domain in the interval 399-495 (SVVFDTSYRK…SAWQIREKER (97 aa)). The SWIM-type zinc-finger motif lies at 674–710 (HAVTFSASNLNSSCSCQMFEHEGLLCRHILKVFNLLD).

Belongs to the FHY3/FAR1 family. As to expression, expressed in hypocotyls, rosette and cauline leaves, inflorescences stems, flowers and siliques.

It is found in the nucleus. Putative transcription activator involved in regulating light control of development. The sequence is that of Protein FAR1-RELATED SEQUENCE 12 (FRS12) from Arabidopsis thaliana (Mouse-ear cress).